The primary structure comprises 921 residues: Isoleucine--tRNA ligase (921 aa).

The short motif at 57–67 (PYANGDIHMGH) is the 'HIGH' region element. Glutamate 552 provides a ligand contact to L-isoleucyl-5'-AMP. A 'KMSKS' region motif is present at residues 593–597 (KMSKS). Lysine 596 contacts ATP. The Zn(2+) site is built by cysteine 888, cysteine 891, cysteine 908, and cysteine 911.

It belongs to the class-I aminoacyl-tRNA synthetase family. IleS type 1 subfamily. As to quaternary structure, monomer. Zn(2+) is required as a cofactor.

The protein resides in the cytoplasm. It carries out the reaction tRNA(Ile) + L-isoleucine + ATP = L-isoleucyl-tRNA(Ile) + AMP + diphosphate. Its function is as follows. Catalyzes the attachment of isoleucine to tRNA(Ile). As IleRS can inadvertently accommodate and process structurally similar amino acids such as valine, to avoid such errors it has two additional distinct tRNA(Ile)-dependent editing activities. One activity is designated as 'pretransfer' editing and involves the hydrolysis of activated Val-AMP. The other activity is designated 'posttransfer' editing and involves deacylation of mischarged Val-tRNA(Ile). The sequence is that of Isoleucine--tRNA ligase from Bacillus cereus (strain B4264).